The sequence spans 433 residues: MAKIVKVIGREIIDSRGNPTVEAEVHLEGGFVGLAAAPSGASTGSREALELRDGDKARFLGKGVLKAVAAVNNEIAQALVGKDATNQAEIDQIMIDLDGTENKSKFGANAILAVSLANAKAAAAAKGMPLFAWIAELNGTPGQYSMPLPMMNIINGGEHADNNVDIQEFMIQPVGAKTLKEALRIGAEVFHNLAKVLKGKGLSTAVGDEGGFAPNLESNAAALACIKEAVEKAGYVLGKDVTLAMDCASSEFYNKENGMYEMKGEGKSFTSQEFTHYLEELCKEYPIVSIEDGQDESDWEGFAYQTKVLGDKVQLVGDDLFVTNTKILKEGIEKGIANSILIKFNQIGSLTETLAAIKMAKDAGYTAVISHRSGETEDATIADLAVGTAAGQIKTGSMSRSDRIAKYNQLIRIEEALGDKAPFLGLKAVKGQA.

Residue Q167 participates in (2R)-2-phosphoglycerate binding. E209 acts as the Proton donor in catalysis. 3 residues coordinate Mg(2+): D246, E291, and D318. Positions 343, 372, 373, and 394 each coordinate (2R)-2-phosphoglycerate. The active-site Proton acceptor is the K343.

This sequence belongs to the enolase family. As to quaternary structure, component of the RNA degradosome, a multiprotein complex involved in RNA processing and mRNA degradation. It depends on Mg(2+) as a cofactor.

It localises to the cytoplasm. The protein resides in the secreted. The protein localises to the cell surface. The enzyme catalyses (2R)-2-phosphoglycerate = phosphoenolpyruvate + H2O. Its pathway is carbohydrate degradation; glycolysis; pyruvate from D-glyceraldehyde 3-phosphate: step 4/5. Its function is as follows. Catalyzes the reversible conversion of 2-phosphoglycerate (2-PG) into phosphoenolpyruvate (PEP). It is essential for the degradation of carbohydrates via glycolysis. This is Enolase from Pasteurella multocida (strain Pm70).